Here is a 380-residue protein sequence, read N- to C-terminus: Cytochrome b (380 aa).

4 consecutive transmembrane segments (helical) span residues 33 to 53 (FGSL…FLAM), 77 to 98 (WLIR…YLHI), 113 to 133 (WNVG…GYVL), and 178 to 198 (FFAF…LHFL). 2 residues coordinate heme b: H83 and H97. Residues H182 and H196 each contribute to the heme b site. Residue H201 coordinates a ubiquinone. 4 helical membrane-spanning segments follow: residues 226-246 (YKDL…SLFS), 288-308 (LGGV…PILH), 320-340 (LTQI…WIGG), and 347-367 (FIIV…VIMP).

Belongs to the cytochrome b family. The cytochrome bc1 complex contains 3 respiratory subunits (MT-CYB, CYC1 and UQCRFS1), 2 core proteins (UQCRC1 and UQCRC2) and probably 6 low-molecular weight proteins. Heme b serves as cofactor.

It localises to the mitochondrion inner membrane. Component of the ubiquinol-cytochrome c reductase complex (complex III or cytochrome b-c1 complex) that is part of the mitochondrial respiratory chain. The b-c1 complex mediates electron transfer from ubiquinol to cytochrome c. Contributes to the generation of a proton gradient across the mitochondrial membrane that is then used for ATP synthesis. This chain is Cytochrome b (mt-cyb), found in Zeus faber (John Dory).